A 451-amino-acid chain; its full sequence is MNKKILFLGVGGIGVSALAIAAKRLGAHVAGYDSVANKLTAKLEALGIVIFISPNGVDVANFDIVVYSSAILSSHPLLSQARSLGIQCLQRAMFLAVLMKDFSYSLAITGTHGKTTTSSVLATLLCQLDKYSSFIVGGVVKYADSNIQVNGTDKLVIEADESDASFLFLSPQVVIITNIDLDHMATYNNSYQTLLENFTDFVSKESVKSIYLCVDDQGCRDLLAKYNQSDKNVTSYGFSINADVQIYDYHIIDEITHFKIRYKGDDLSFKLQLPGRYNVQNATACIITCLDLGFKYEDIRNALIKVTGVARRFDLYTKVISGHQVTVIDDYGHHPVEVANSISAVRDRYPNKKIIHVFQPHRYTRNRDLIKDWPKALSLADQLILLPTYSADEQIIKGAESQDIVKGLSGYLLADGFDHAIYFLEKLANENTVILIQGAGDVTNLVEILSE.

Gly110–Thr116 provides a ligand contact to ATP.

It belongs to the MurCDEF family.

The protein resides in the cytoplasm. The enzyme catalyses UDP-N-acetyl-alpha-D-muramate + L-alanine + ATP = UDP-N-acetyl-alpha-D-muramoyl-L-alanine + ADP + phosphate + H(+). The protein operates within cell wall biogenesis; peptidoglycan biosynthesis. Functionally, cell wall formation. The protein is UDP-N-acetylmuramate--L-alanine ligase of Francisella tularensis subsp. holarctica (strain FTNF002-00 / FTA).